Consider the following 285-residue polypeptide: Large ribosomal subunit protein uL2 (285 aa).

A disordered region spans residues 215–285; that stretch reads GRSRHKGIRP…IIRNRKGEQY (71 aa). Residues 256–272 are compositionally biased toward basic residues; it reads WGKRHMGVKTRNMKKHS.

It belongs to the universal ribosomal protein uL2 family. As to quaternary structure, part of the 50S ribosomal subunit. Forms a bridge to the 30S subunit in the 70S ribosome.

In terms of biological role, one of the primary rRNA binding proteins. Required for association of the 30S and 50S subunits to form the 70S ribosome, for tRNA binding and peptide bond formation. It has been suggested to have peptidyltransferase activity; this is somewhat controversial. Makes several contacts with the 16S rRNA in the 70S ribosome. The polypeptide is Large ribosomal subunit protein uL2 (Mycoplasma genitalium (strain ATCC 33530 / DSM 19775 / NCTC 10195 / G37) (Mycoplasmoides genitalium)).